Reading from the N-terminus, the 172-residue chain is Peptide methionine sulfoxide reductase MsrA 1 (172 aa).

Cys-14 is a catalytic residue.

The protein belongs to the MsrA Met sulfoxide reductase family.

It catalyses the reaction L-methionyl-[protein] + [thioredoxin]-disulfide + H2O = L-methionyl-(S)-S-oxide-[protein] + [thioredoxin]-dithiol. The enzyme catalyses [thioredoxin]-disulfide + L-methionine + H2O = L-methionine (S)-S-oxide + [thioredoxin]-dithiol. In terms of biological role, has an important function as a repair enzyme for proteins that have been inactivated by oxidation. Catalyzes the reversible oxidation-reduction of methionine sulfoxide in proteins to methionine. This chain is Peptide methionine sulfoxide reductase MsrA 1 (msrA1), found in Mesorhizobium japonicum (strain LMG 29417 / CECT 9101 / MAFF 303099) (Mesorhizobium loti (strain MAFF 303099)).